Here is a 213-residue protein sequence, read N- to C-terminus: 3-demethoxyubiquinol 3-hydroxylase (213 aa).

Fe cation is bound by residues E62, E92, H95, E144, E176, and H179.

The protein belongs to the COQ7 family. Requires Fe cation as cofactor.

The protein localises to the cell membrane. It catalyses the reaction a 5-methoxy-2-methyl-3-(all-trans-polyprenyl)benzene-1,4-diol + AH2 + O2 = a 3-demethylubiquinol + A + H2O. Its pathway is cofactor biosynthesis; ubiquinone biosynthesis. In terms of biological role, catalyzes the hydroxylation of 2-nonaprenyl-3-methyl-6-methoxy-1,4-benzoquinol during ubiquinone biosynthesis. The protein is 3-demethoxyubiquinol 3-hydroxylase of Legionella pneumophila (strain Corby).